We begin with the raw amino-acid sequence, 179 residues long: ATP synthase subunit delta (179 aa).

The protein belongs to the ATPase delta chain family. As to quaternary structure, F-type ATPases have 2 components, F(1) - the catalytic core - and F(0) - the membrane proton channel. F(1) has five subunits: alpha(3), beta(3), gamma(1), delta(1), epsilon(1). F(0) has three main subunits: a(1), b(2) and c(10-14). The alpha and beta chains form an alternating ring which encloses part of the gamma chain. F(1) is attached to F(0) by a central stalk formed by the gamma and epsilon chains, while a peripheral stalk is formed by the delta and b chains.

It is found in the cell inner membrane. F(1)F(0) ATP synthase produces ATP from ADP in the presence of a proton or sodium gradient. F-type ATPases consist of two structural domains, F(1) containing the extramembraneous catalytic core and F(0) containing the membrane proton channel, linked together by a central stalk and a peripheral stalk. During catalysis, ATP synthesis in the catalytic domain of F(1) is coupled via a rotary mechanism of the central stalk subunits to proton translocation. Its function is as follows. This protein is part of the stalk that links CF(0) to CF(1). It either transmits conformational changes from CF(0) to CF(1) or is implicated in proton conduction. This is ATP synthase subunit delta from Burkholderia mallei (strain NCTC 10247).